Here is a 386-residue protein sequence, read N- to C-terminus: Putative 8-amino-7-oxononanoate synthase 2 (386 aa).

Arg21 serves as a coordination point for substrate. A pyridoxal 5'-phosphate-binding site is contributed by 104-105 (GY). His129 contacts substrate. Residues Ser176, 201–204 (DDAH), and 230–233 (TLSK) each bind pyridoxal 5'-phosphate. Lys233 bears the N6-(pyridoxal phosphate)lysine mark.

The protein belongs to the class-II pyridoxal-phosphate-dependent aminotransferase family. BioF subfamily. In terms of assembly, homodimer. Requires pyridoxal 5'-phosphate as cofactor.

The catalysed reaction is 6-carboxyhexanoyl-[ACP] + L-alanine + H(+) = (8S)-8-amino-7-oxononanoate + holo-[ACP] + CO2. The protein operates within cofactor biosynthesis; biotin biosynthesis. In terms of biological role, catalyzes the decarboxylative condensation of pimeloyl-[acyl-carrier protein] and L-alanine to produce 8-amino-7-oxononanoate (AON), [acyl-carrier protein], and carbon dioxide. The polypeptide is Putative 8-amino-7-oxononanoate synthase 2 (bioF) (Bacillus velezensis (strain DSM 23117 / BGSC 10A6 / LMG 26770 / FZB42) (Bacillus amyloliquefaciens subsp. plantarum)).